The primary structure comprises 277 residues: Phosphatidylglycerol--prolipoprotein diacylglyceryl transferase (277 aa).

3 helical membrane-spanning segments follow: residues 16–36 (FFQI…FYFL), 62–82 (LLFF…VLFY), and 101–121 (GMAF…FAHL). Arg145 provides a ligand contact to a 1,2-diacyl-sn-glycero-3-phospho-(1'-sn-glycerol). The next 2 membrane-spanning stretches (helical) occupy residues 214–234 (PIWG…RFIA) and 243–263 (FLGL…PMIV).

The protein belongs to the Lgt family.

It localises to the cell inner membrane. The enzyme catalyses L-cysteinyl-[prolipoprotein] + a 1,2-diacyl-sn-glycero-3-phospho-(1'-sn-glycerol) = an S-1,2-diacyl-sn-glyceryl-L-cysteinyl-[prolipoprotein] + sn-glycerol 1-phosphate + H(+). Its pathway is protein modification; lipoprotein biosynthesis (diacylglyceryl transfer). In terms of biological role, catalyzes the transfer of the diacylglyceryl group from phosphatidylglycerol to the sulfhydryl group of the N-terminal cysteine of a prolipoprotein, the first step in the formation of mature lipoproteins. This Leptothrix cholodnii (strain ATCC 51168 / LMG 8142 / SP-6) (Leptothrix discophora (strain SP-6)) protein is Phosphatidylglycerol--prolipoprotein diacylglyceryl transferase.